A 90-amino-acid chain; its full sequence is U7-theraphotoxin-Hhn1i (90 aa).

The signal sequence occupies residues 1-19 (MKTAIFTVVLALAVFAVLS). The propeptide occupies 20 to 50 (FGWEANEKALSEEFTELIHEKEAASETEARE). Intrachain disulfides connect Cys-51–Cys-65, Cys-58–Cys-70, and Cys-64–Cys-81.

It belongs to the neurotoxin 10 (Hwtx-1) family. 13 (Hntx-13) subfamily. Expressed by the venom gland.

The protein localises to the secreted. Ion channel inhibitor. The polypeptide is U7-theraphotoxin-Hhn1i (Cyriopagopus hainanus (Chinese bird spider)).